Reading from the N-terminus, the 285-residue chain is Acetylglutamate kinase (285 aa).

Substrate contacts are provided by residues 63-64 (GG), Arg85, and Asn178.

This sequence belongs to the acetylglutamate kinase family. ArgB subfamily.

The protein localises to the cytoplasm. The enzyme catalyses N-acetyl-L-glutamate + ATP = N-acetyl-L-glutamyl 5-phosphate + ADP. The protein operates within amino-acid biosynthesis; L-arginine biosynthesis; N(2)-acetyl-L-ornithine from L-glutamate: step 2/4. Catalyzes the ATP-dependent phosphorylation of N-acetyl-L-glutamate. The sequence is that of Acetylglutamate kinase from Synechococcus sp. (strain CC9311).